Here is a 330-residue protein sequence, read N- to C-terminus: Cathepsin K (330 aa).

Residues 1 to 16 form the signal peptide; it reads MWGLEVLLLLPMASFA. Residues 17–115 constitute a propeptide, activation peptide; the sequence is LYPEEILDTQ…TLYIPDWESR (99 aa). Asparagine 104 carries an N-linked (GlcNAc...) asparagine glycan. Intrachain disulfides connect cysteine 137-cysteine 178, cysteine 171-cysteine 211, and cysteine 270-cysteine 319. The active site involves cysteine 140. Catalysis depends on residues histidine 277 and asparagine 297.

Belongs to the peptidase C1 family.

The protein localises to the lysosome. Its subcellular location is the secreted. It localises to the apical cell membrane. It catalyses the reaction Broad proteolytic activity. With small-molecule substrates and inhibitors, the major determinant of specificity is P2, which is preferably Leu, Met &gt; Phe, and not Arg.. In terms of biological role, thiol protease involved in osteoclastic bone resorption and may participate partially in the disorder of bone remodeling. Displays potent endoprotease activity against fibrinogen at acid pH. May play an important role in extracellular matrix degradation. Involved in the release of thyroid hormone thyroxine (T4) by limited proteolysis of TG/thyroglobulin in the thyroid follicle lumen. This is Cathepsin K (CTSK) from Canis lupus familiaris (Dog).